A 288-amino-acid polypeptide reads, in one-letter code: uncharacterized protein (288 aa).

This is an uncharacterized protein from Methanocaldococcus jannaschii (strain ATCC 43067 / DSM 2661 / JAL-1 / JCM 10045 / NBRC 100440) (Methanococcus jannaschii).